A 447-amino-acid chain; its full sequence is Chromosomal replication initiator protein DnaA (447 aa).

The tract at residues 1–79 (MVSCENLWQQ…TGQEITVKLI (79 aa)) is domain I, interacts with DnaA modulators. Residues 79–105 (ITDGLEPHSLIGQESSLPMETTPKNAT) are domain II. The segment at 106 to 322 (ALNGKYTFSR…GALIRAIAYT (217 aa)) is domain III, AAA+ region. Residues Gly150, Gly152, Lys153, and Thr154 each coordinate ATP. A domain IV, binds dsDNA region spans residues 323-447 (SLSNVAMTVE…INIAGQAPES (125 aa)).

Belongs to the DnaA family. In terms of assembly, oligomerizes as a right-handed, spiral filament on DNA at oriC.

The protein resides in the cytoplasm. Functionally, plays an essential role in the initiation and regulation of chromosomal replication. ATP-DnaA binds to the origin of replication (oriC) to initiate formation of the DNA replication initiation complex once per cell cycle. Binds the DnaA box (a 9 base pair repeat at the origin) and separates the double-stranded (ds)DNA. Forms a right-handed helical filament on oriC DNA; dsDNA binds to the exterior of the filament while single-stranded (ss)DNA is stabiized in the filament's interior. The ATP-DnaA-oriC complex binds and stabilizes one strand of the AT-rich DNA unwinding element (DUE), permitting loading of DNA polymerase. After initiation quickly degrades to an ADP-DnaA complex that is not apt for DNA replication. Binds acidic phospholipids. In terms of biological role, isolated domain IV (residues 348-447) binds both E.coli and B.subtilis oriC. This Synechocystis sp. (strain ATCC 27184 / PCC 6803 / Kazusa) protein is Chromosomal replication initiator protein DnaA.